A 158-amino-acid chain; its full sequence is Large ribosomal subunit protein uL30 (158 aa).

Belongs to the universal ribosomal protein uL30 family. In terms of assembly, part of the 50S ribosomal subunit.

The sequence is that of Large ribosomal subunit protein uL30 from Sulfurisphaera tokodaii (strain DSM 16993 / JCM 10545 / NBRC 100140 / 7) (Sulfolobus tokodaii).